A 428-amino-acid polypeptide reads, in one-letter code: 26S proteasome regulatory subunit 7 (428 aa).

211–218 (GPPGTGKT) lines the ATP pocket.

The protein belongs to the AAA ATPase family.

It localises to the cytoplasm. The protein resides in the nucleus. The 26S proteasome is involved in the ATP-dependent degradation of ubiquitinated proteins. The regulatory (or ATPase) complex confers ATP dependency and substrate specificity to the 26S complex. This Dictyostelium discoideum (Social amoeba) protein is 26S proteasome regulatory subunit 7 (psmC2).